The primary structure comprises 802 residues: Phenylalanine--tRNA ligase beta subunit (802 aa).

Positions 38 to 149 (KSSLKPFVIA…ADAPVGTSFA (112 aa)) constitute a tRNA-binding domain. Residues 399–474 (HKPKIVSFPI…RIHGVDNIAP (76 aa)) form the B5 domain. Residues aspartate 452, aspartate 458, glutamate 461, and glutamate 462 each coordinate Mg(2+). Positions 708 to 801 (SAFQAVKRDF…VGKQTGGVLR (94 aa)) constitute an FDX-ACB domain.

Belongs to the phenylalanyl-tRNA synthetase beta subunit family. Type 1 subfamily. In terms of assembly, tetramer of two alpha and two beta subunits. The cofactor is Mg(2+).

It localises to the cytoplasm. It catalyses the reaction tRNA(Phe) + L-phenylalanine + ATP = L-phenylalanyl-tRNA(Phe) + AMP + diphosphate + H(+). The protein is Phenylalanine--tRNA ligase beta subunit of Mesorhizobium japonicum (strain LMG 29417 / CECT 9101 / MAFF 303099) (Mesorhizobium loti (strain MAFF 303099)).